The chain runs to 291 residues: Pyridoxal 5'-phosphate synthase subunit PdxS (291 aa).

Residue aspartate 23 participates in D-ribose 5-phosphate binding. Residue lysine 80 is the Schiff-base intermediate with D-ribose 5-phosphate of the active site. Residue glycine 152 coordinates D-ribose 5-phosphate. Position 164 (arginine 164) interacts with D-glyceraldehyde 3-phosphate. Residues glycine 213 and glycine 234 to serine 235 contribute to the D-ribose 5-phosphate site.

Belongs to the PdxS/SNZ family. In the presence of PdxT, forms a dodecamer of heterodimers.

The catalysed reaction is aldehydo-D-ribose 5-phosphate + D-glyceraldehyde 3-phosphate + L-glutamine = pyridoxal 5'-phosphate + L-glutamate + phosphate + 3 H2O + H(+). It functions in the pathway cofactor biosynthesis; pyridoxal 5'-phosphate biosynthesis. Catalyzes the formation of pyridoxal 5'-phosphate from ribose 5-phosphate (RBP), glyceraldehyde 3-phosphate (G3P) and ammonia. The ammonia is provided by the PdxT subunit. Can also use ribulose 5-phosphate and dihydroxyacetone phosphate as substrates, resulting from enzyme-catalyzed isomerization of RBP and G3P, respectively. The chain is Pyridoxal 5'-phosphate synthase subunit PdxS from Methanocorpusculum labreanum (strain ATCC 43576 / DSM 4855 / Z).